The following is a 360-amino-acid chain: Casein kinase II subunit alpha (360 aa).

Positions 38–323 constitute a Protein kinase domain; it reads YQLVRKLGRG…AQEAMGHEYF (286 aa). ATP-binding positions include 44-52 and K67; that span reads LGRGKYSEV. Catalysis depends on D155, which acts as the Proton acceptor. The interval 334 to 360 is disordered; sequence NGTEQADGQGASNSASSQSSDAKIDGA. A compositionally biased stretch (low complexity) spans 338-354; sequence QADGQGASNSASSQSSD.

This sequence belongs to the protein kinase superfamily. Ser/Thr protein kinase family. CK2 subfamily. Tetramer of two alpha and two beta chains. As to expression, expressed in a subset of the adult male sensory neurons: CEM head neurons, ray RnB neurons, and hook HOB tail neurons.

The protein localises to the cell projection. It localises to the axon. The protein resides in the cilium. Its subcellular location is the dendrite. It is found in the perikaryon. It catalyses the reaction L-seryl-[protein] + ATP = O-phospho-L-seryl-[protein] + ADP + H(+). The enzyme catalyses L-threonyl-[protein] + ATP = O-phospho-L-threonyl-[protein] + ADP + H(+). Functionally, casein kinases are operationally defined by their preferential utilization of acidic proteins such as caseins as substrates. The alpha chain contains the catalytic site. May participate in Wnt signaling. Modulates two aspects of male mating behavior; response to hermaphrodite contact and vulval location, acting in the same pathway as lov-1 and pkd-2. The polypeptide is Casein kinase II subunit alpha (kin-3) (Caenorhabditis elegans).